Here is a 341-residue protein sequence, read N- to C-terminus: S-adenosylmethionine:tRNA ribosyltransferase-isomerase (341 aa).

This sequence belongs to the QueA family. In terms of assembly, monomer.

It localises to the cytoplasm. The catalysed reaction is 7-aminomethyl-7-carbaguanosine(34) in tRNA + S-adenosyl-L-methionine = epoxyqueuosine(34) in tRNA + adenine + L-methionine + 2 H(+). Its pathway is tRNA modification; tRNA-queuosine biosynthesis. Functionally, transfers and isomerizes the ribose moiety from AdoMet to the 7-aminomethyl group of 7-deazaguanine (preQ1-tRNA) to give epoxyqueuosine (oQ-tRNA). The polypeptide is S-adenosylmethionine:tRNA ribosyltransferase-isomerase (Staphylococcus aureus (strain Mu3 / ATCC 700698)).